A 571-amino-acid polypeptide reads, in one-letter code: Phosphoenolpyruvate-protein phosphotransferase (571 aa).

The active-site Tele-phosphohistidine intermediate is the His203. Phosphoenolpyruvate is bound by residues Arg306 and Arg342. Positions 429 and 453 each coordinate Mg(2+). Residues 452–453 and Arg463 contribute to the phosphoenolpyruvate site; that span reads ND. Residue Cys500 is the Proton donor of the active site.

The protein belongs to the PEP-utilizing enzyme family. Homodimer. It depends on Mg(2+) as a cofactor.

The protein localises to the cytoplasm. The catalysed reaction is L-histidyl-[protein] + phosphoenolpyruvate = N(pros)-phospho-L-histidyl-[protein] + pyruvate. General (non sugar-specific) component of the phosphoenolpyruvate-dependent sugar phosphotransferase system (sugar PTS). This major carbohydrate active-transport system catalyzes the phosphorylation of incoming sugar substrates concomitantly with their translocation across the cell membrane. Enzyme I transfers the phosphoryl group from phosphoenolpyruvate (PEP) to the phosphoryl carrier protein (HPr). This Chlamydia pneumoniae (Chlamydophila pneumoniae) protein is Phosphoenolpyruvate-protein phosphotransferase (ptsI).